We begin with the raw amino-acid sequence, 204 residues long: Terpene cyclase ausL (204 aa).

5 helical membrane-spanning segments follow: residues 19–39, 49–69, 75–95, 114–134, and 138–158; these read LSEMLKILAALGWSTNYLAMV, AIAVLPLCCDIAWEFTYAWIY, HWQGVVRVWFFLHTAVLAATL, LVLLYAAVIAAFAAGQLCLAL, and GALGFHWGGALCQFLSSSAAV.

This sequence belongs to the paxB family.

It is found in the membrane. The protein operates within secondary metabolite biosynthesis; terpenoid biosynthesis. In terms of biological role, terpene cyclase; part of the gene cluster B that mediates the biosynthesis of austinol and dehydroaustinol, two fungal meroterpenoids. The first step of the pathway is the synthesis of 3,5-dimethylorsellinic acid by the polyketide synthase ausA. 3,5-dimethylorsellinic acid is then prenylated by the polyprenyl transferase ausN. Further epoxidation by the FAD-dependent monooxygenase ausM and cyclization by the probable terpene cyclase ausL lead to the formation of protoaustinoid A. Protoaustinoid A is then oxidized to spiro-lactone preaustinoid A3 by the combined action of the FAD-binding monooxygenases ausB and ausC, and the dioxygenase ausE. Acid-catalyzed keto-rearrangement and ring contraction of the tetraketide portion of preaustinoid A3 by ausJ lead to the formation of preaustinoid A4. The aldo-keto reductase ausK, with the help of ausH, is involved in the next step by transforming preaustinoid A4 into isoaustinone which is in turn hydroxylated by the P450 monooxygenase ausI to form austinolide. Finally, the cytochrome P450 monooxygenase ausG modifies austinolide to austinol. Austinol can be further modified to dehydroaustinol which forms a diffusible complex with diorcinol that initiates conidiation. Due to genetic rearrangements of the clusters and the subsequent loss of some enzymes, the end products of the Emericella nidulans austinoid biosynthesis clusters are austinol and dehydroaustinol, even if additional enzymes, such as the O-acetyltransferase ausQ and the cytochrome P450 monooxygenase ausR are still functional. In Emericella nidulans (strain FGSC A4 / ATCC 38163 / CBS 112.46 / NRRL 194 / M139) (Aspergillus nidulans), this protein is Terpene cyclase ausL.